We begin with the raw amino-acid sequence, 1935 residues long: Myosin-7 (1935 aa).

The Myosin N-terminal SH3-like domain maps to 32 to 81; that stretch reads DLKKDVFVPDDKQEFVKAKIVSREGGKVTAETEYGKTVTVKEDQVMQQNP. The Myosin motor domain maps to 85-778; sequence DKIEDMAMLT…LLGLLEEMRD (694 aa). Lysine 129 is modified (N6,N6,N6-trimethyllysine). Residue 178–185 coordinates ATP; the sequence is GESGAGKT. Phosphothreonine is present on threonine 378. Actin-binding stretches follow at residues 655-677 and 757-771; these read LNKLMTNLRSTHPHFVRCIIPNE and KFGHTKVFFKAGLLG. The region spanning 781 to 810 is the IQ domain; it reads LSRIITRIQAQSRGVLARMEYKKLLERRDS. A coiled-coil region spans residues 839–1935; the sequence is LLKSAEREKE…DIGTKGLNEE (1097 aa). Phosphoserine is present on residues serine 1137 and serine 1269. Residue threonine 1282 is modified to Phosphothreonine. Position 1308 is a phosphotyrosine (tyrosine 1308). Phosphothreonine is present on threonine 1309. Serine 1510 is subject to Phosphoserine. Position 1513 is a phosphothreonine (threonine 1513). The tract at residues 1907–1935 is disordered; it reads EERADIAESQVNKLRAKSRDIGTKGLNEE. A compositionally biased stretch (basic and acidic residues) spans 1923–1935; that stretch reads KSRDIGTKGLNEE.

The protein belongs to the TRAFAC class myosin-kinesin ATPase superfamily. Myosin family. Muscle myosin is a hexameric protein that consists of 2 heavy chain subunits (MHC), 2 alkali light chain subunits (MLC) and 2 regulatory light chain subunits (MLC-2). Interacts with ECPAS. Interacts (via C-terminus) with LRRC39. Both wild type and variant Gln-403 are detected in skeletal muscle (at protein level).

It is found in the cytoplasm. The protein resides in the myofibril. It localises to the sarcomere. In terms of biological role, myosins are actin-based motor molecules with ATPase activity essential for muscle contraction. Forms regular bipolar thick filaments that, together with actin thin filaments, constitute the fundamental contractile unit of skeletal and cardiac muscle. The sequence is that of Myosin-7 (MYH7) from Homo sapiens (Human).